Consider the following 123-residue polypeptide: Galanin peptides (123 aa).

The N-terminal stretch at 1–19 is a signal peptide; it reads MPRGSVLLLASLLLAAALS. Positions 20–30 are excised as a propeptide; sequence ATLGLGSPVKE. A compositionally biased stretch (basic and acidic residues) spans 53-66; that stretch reads SFQDKHGLAGKREL. The interval 53–79 is disordered; the sequence is SFQDKHGLAGKRELEPEDEARPGSFDR. Ala61 is subject to Alanine amide. Ser116 carries the phosphoserine modification.

It belongs to the galanin family.

The protein resides in the secreted. Its function is as follows. Endocrine hormone of the central and peripheral nervous systems that binds and activates the G protein-coupled receptors GALR1, GALR2, and GALR3. This small neuropeptide may regulate diverse physiologic functions including contraction of smooth muscle of the gastrointestinal and genitourinary tract, growth hormone and insulin release and adrenal secretion. The polypeptide is Galanin peptides (GAL) (Bos taurus (Bovine)).